Reading from the N-terminus, the 643-residue chain is 1-deoxy-D-xylulose-5-phosphate synthase (643 aa).

Thiamine diphosphate-binding positions include H78 and 119–121 (AHS). Mg(2+) is bound at residue D150. Thiamine diphosphate-binding positions include 151-152 (GS), N179, Y288, and E370. Mg(2+) is bound at residue N179.

Belongs to the transketolase family. DXPS subfamily. As to quaternary structure, homodimer. Requires Mg(2+) as cofactor. Thiamine diphosphate is required as a cofactor.

It carries out the reaction D-glyceraldehyde 3-phosphate + pyruvate + H(+) = 1-deoxy-D-xylulose 5-phosphate + CO2. It participates in metabolic intermediate biosynthesis; 1-deoxy-D-xylulose 5-phosphate biosynthesis; 1-deoxy-D-xylulose 5-phosphate from D-glyceraldehyde 3-phosphate and pyruvate: step 1/1. Catalyzes the acyloin condensation reaction between C atoms 2 and 3 of pyruvate and glyceraldehyde 3-phosphate to yield 1-deoxy-D-xylulose-5-phosphate (DXP). The polypeptide is 1-deoxy-D-xylulose-5-phosphate synthase (Brucella ovis (strain ATCC 25840 / 63/290 / NCTC 10512)).